The chain runs to 572 residues: Thiamine biosynthesis protein THI22 (572 aa).

Residues 1 to 19 (MVIILLGLCTLGFPRTAFC) form the signal peptide.

Belongs to the thiaminase-2 family.

Its subcellular location is the secreted. Functionally, is not required for thiamine biosynthesis. The sequence is that of Thiamine biosynthesis protein THI22 (THI22) from Saccharomyces cerevisiae (strain ATCC 204508 / S288c) (Baker's yeast).